A 357-amino-acid polypeptide reads, in one-letter code: Protein-glutamate methylesterase/protein-glutamine glutaminase (357 aa).

Residues 3–120 form the Response regulatory domain; that stretch reads RVIVVDDSAF…LASMDLAALS (118 aa). D54 is modified (4-aspartylphosphate). The region spanning 165–357 is the CheB-type methylesterase domain; the sequence is ERSRRDIIAI…AERVASALYK (193 aa). Residues S177, H204, and D300 contribute to the active site.

It belongs to the CheB family. In terms of processing, phosphorylated by CheA. Phosphorylation of the N-terminal regulatory domain activates the methylesterase activity.

It localises to the cytoplasm. The enzyme catalyses [protein]-L-glutamate 5-O-methyl ester + H2O = L-glutamyl-[protein] + methanol + H(+). It catalyses the reaction L-glutaminyl-[protein] + H2O = L-glutamyl-[protein] + NH4(+). In terms of biological role, involved in chemotaxis. Part of a chemotaxis signal transduction system that modulates chemotaxis in response to various stimuli. Catalyzes the demethylation of specific methylglutamate residues introduced into the chemoreceptors (methyl-accepting chemotaxis proteins or MCP) by CheR. Also mediates the irreversible deamidation of specific glutamine residues to glutamic acid. This chain is Protein-glutamate methylesterase/protein-glutamine glutaminase, found in Lawsonia intracellularis (strain PHE/MN1-00).